We begin with the raw amino-acid sequence, 411 residues long: UPF0761 membrane protein PLES_43641 (411 aa).

6 consecutive transmembrane segments (helical) span residues 36 to 56 (LFAVVPMMTVMFSMLSLIPAF), 92 to 112 (HLTWVGVVFLAVTAFTMLVTI), 132 to 152 (FLLYWAILSLGPLLLGAGFAV), 174 to 194 (LLGLMPLAFSVAAFTLLYSAV), 207 to 229 (GGVFTAVLFEAAKTLFGLYVSLF), and 244 to 264 (IFLLWIYLSWMIVLFGAVLVC).

Belongs to the UPF0761 family.

The protein localises to the cell inner membrane. The chain is UPF0761 membrane protein PLES_43641 from Pseudomonas aeruginosa (strain LESB58).